The following is a 269-amino-acid chain: uncharacterized protein (269 aa).

Residues 12–19 (GKGGTGKS) and 130–137 (GYLIVGKS) each bind ATP.

To M.jannaschii MJ0578.

This is an uncharacterized protein from Methanocaldococcus jannaschii (strain ATCC 43067 / DSM 2661 / JAL-1 / JCM 10045 / NBRC 100440) (Methanococcus jannaschii).